The sequence spans 210 residues: Flagellar transcriptional regulator FlhC (210 aa).

Zn(2+)-binding residues include Cys-144, Cys-147, Cys-164, and Cys-167.

This sequence belongs to the FlhC family. As to quaternary structure, heterohexamer composed of two FlhC and four FlhD subunits. Each FlhC binds a FlhD dimer, forming a heterotrimer, and a hexamer assembles by dimerization of two heterotrimers. Zn(2+) serves as cofactor.

Its subcellular location is the cytoplasm. Functionally, functions in complex with FlhD as a master transcriptional regulator that regulates transcription of several flagellar and non-flagellar operons by binding to their promoter region. Activates expression of class 2 flagellar genes, including fliA, which is a flagellum-specific sigma factor that turns on the class 3 genes. Also regulates genes whose products function in a variety of physiological pathways. The protein is Flagellar transcriptional regulator FlhC of Cupriavidus pinatubonensis (strain JMP 134 / LMG 1197) (Cupriavidus necator (strain JMP 134)).